The sequence spans 496 residues: Histidine--tRNA ligase (496 aa).

Belongs to the class-II aminoacyl-tRNA synthetase family. As to quaternary structure, homodimer.

The protein resides in the cytoplasm. It catalyses the reaction tRNA(His) + L-histidine + ATP = L-histidyl-tRNA(His) + AMP + diphosphate + H(+). This chain is Histidine--tRNA ligase, found in Bartonella bacilliformis (strain ATCC 35685 / KC583 / Herrer 020/F12,63).